The chain runs to 234 residues: Glucosamine-6-phosphate deaminase (234 aa).

Residue D63 is the Proton acceptor; for enolization step of the active site. N129 serves as the catalytic For ring-opening step. H131 serves as the catalytic Proton acceptor; for ring-opening step. The For ring-opening step role is filled by E136.

It belongs to the glucosamine/galactosamine-6-phosphate isomerase family. NagB subfamily.

The catalysed reaction is alpha-D-glucosamine 6-phosphate + H2O = beta-D-fructose 6-phosphate + NH4(+). Its pathway is amino-sugar metabolism; N-acetylneuraminate degradation; D-fructose 6-phosphate from N-acetylneuraminate: step 5/5. Its function is as follows. Catalyzes the reversible isomerization-deamination of glucosamine 6-phosphate (GlcN6P) to form fructose 6-phosphate (Fru6P) and ammonium ion. This chain is Glucosamine-6-phosphate deaminase, found in Listeria monocytogenes serotype 4b (strain CLIP80459).